The sequence spans 162 residues: Urease accessory protein UreE 1 (162 aa).

The disordered stretch occupies residues 143 to 162 (SGGHQHHHGHDHDHHHPDHE). The segment covering 152–162 (HDHDHHHPDHE) has biased composition (basic and acidic residues).

It belongs to the UreE family.

The protein localises to the cytoplasm. Its function is as follows. Involved in urease metallocenter assembly. Binds nickel. Probably functions as a nickel donor during metallocenter assembly. The polypeptide is Urease accessory protein UreE 1 (Brucella suis biovar 1 (strain 1330)).